Consider the following 241-residue polypeptide: Probable phosphatase Cthe_0111 (241 aa).

Residues His8, His10, His16, His41, Glu74, His102, His132, Asp192, and His194 each coordinate Zn(2+).

This sequence belongs to the PHP family. Zn(2+) is required as a cofactor.

This is Probable phosphatase Cthe_0111 from Acetivibrio thermocellus (strain ATCC 27405 / DSM 1237 / JCM 9322 / NBRC 103400 / NCIMB 10682 / NRRL B-4536 / VPI 7372) (Clostridium thermocellum).